Consider the following 437-residue polypeptide: Oxysterol-binding protein homolog 7 (437 aa).

Polar residues predominate over residues 23-32 (IASNAANSKP). The interval 23–42 (IASNAANSKPSGADTDDIDE) is disordered. The OSBP-related domain (ORD) stretch occupies residues 54–393 (IISQLKPGCD…EDLDYYIYKH (340 aa)). A 1,2-diacyl-sn-glycero-3-phospho-(1D-myo-inositol 4-phosphate) contacts are provided by residues 64 to 69 (LSRITL), 126 to 129 (KPLN), and 157 to 158 (HH). Residues 64 to 69 (LSRITL) and Asn-129 each bind a 1,2-diacyl-sn-glycero-3-phospho-L-serine. Ser-183 is a binding site for a 1,2-diacyl-sn-glycero-3-phospho-L-serine. Residue Lys-276 forms a Glycyl lysine isopeptide (Lys-Gly) (interchain with G-Cter in ubiquitin) linkage. A 1,2-diacyl-sn-glycero-3-phospho-(1D-myo-inositol 4-phosphate)-binding residues include Lys-351, Glu-355, and Arg-359.

This sequence belongs to the OSBP family. In terms of assembly, interacts with the AAA ATPase VPS4; regulates OSH7 membrane association. VPS4 is required for membrane dissociation of OSH7.

Its subcellular location is the cytoplasm. The protein resides in the cell membrane. It is found in the endoplasmic reticulum membrane. It catalyses the reaction a 1,2-diacyl-sn-glycero-3-phospho-L-serine(in) = a 1,2-diacyl-sn-glycero-3-phospho-L-serine(out). In terms of biological role, ipid transport protein (LTP) involved in non-vesicular transfer of lipids between membranes. Functions in phosphoinositide-coupled directional transport of various lipids by carrying the lipid molecule in a hydrophobic pocket and transferring it between membranes through the cytosol. Involved in maintenance of intracellular sterol distribution and homeostasis. Involved in lipid countertransport between the endoplasmic reticulum and the plasma membrane. Specifically exchanges phosphatidylserine with phosphatidylinositol 4-phosphate (PI4P), delivering phosphatidylserine to the PM in exchange for PI4P, which is delivered to the ER-localized PI4P phosphatase SAC1 for degradation. Thus, by maintaining a PI4P gradient at the ER/PM interface, SAC1 drives PS transport. Binds phosphatidylserine and PI4P in a mutually exclusive manner. The sequence is that of Oxysterol-binding protein homolog 7 from Saccharomyces cerevisiae (strain ATCC 204508 / S288c) (Baker's yeast).